The sequence spans 733 residues: Nuclear hormone receptor family member nhr-66 (733 aa).

Low complexity-rich tracts occupy residues 113–130 (PAIPSSSSCSEPSTSQAS) and 165–185 (QQNRQQHQQQQRQQQQAQQQN). The tract at residues 113 to 190 (PAIPSSSSCS…AQQQNSMARK (78 aa)) is disordered. Positions 266–343 (VPACAICGTD…SGMDKNSVQH (78 aa)) form a DNA-binding region, nuclear receptor. 2 consecutive NR C4-type zinc fingers follow at residues 269–289 (CAICGTDSTGIHFGVDACAAC) and 305–326 (CNKGGKCTVVKDGSAGQKCRAC). The disordered stretch occupies residues 361 to 396 (PDAEFEPSAKVSTVSEPSTSSGPSGGFNQNVSSPAG). A compositionally biased stretch (low complexity) spans 371–382 (VSTVSEPSTSSG). Residues 444–687 (CLGDWFRKPS…ACFNQMLDVE (244 aa)) enclose the NR LBD domain. Positions 676–687 (ADACFNQMLDVE) are AF-2. A disordered region spans residues 691–733 (VSPDGQKDSEAEQGPSPVSVPEAARGSYQDDDMPPVLEKNCDL).

The protein belongs to the nuclear hormone receptor family. In terms of assembly, interacts with nuclear hormone receptor nhr-49; the interaction is direct. As to expression, widely expressed, including in hypodermis, gut, muscle, and neuronal cells of the ventral nerve cord, head, and tail ganglia. Expressed in the head ganglion in several sensory and interneurons, including AVA.

Its subcellular location is the nucleus. Transcription factor. Binds to regulatory elements and regulates transcription of target genes, including the potassium channel accessory subunit mps-2. Negatively regulates transcription of mps-2, thereby modulating age-dependent memory decline. In concert with nuclear hormone receptor nhr-49, involved in regulating target genes with roles in sphingolipid breakdown and lipid remodeling. Plays a role in modulating mitochondrial morphology and function. The protein is Nuclear hormone receptor family member nhr-66 of Caenorhabditis elegans.